The following is a 134-amino-acid chain: Bradykinin-related peptides (134 aa).

A signal peptide spans 1–22 (MAFLKKSLFLVLFLGVVSLSFC). 3 propeptides span residues 23-44 (EEEKREEHEEEKRDEEDAESLG), 71-82 (RSISGLTPIRLS), and 99-121 (ISEADPGFTPSFVVIKGLSPLRG). Basic and acidic residues predominate over residues 24–33 (EEKREEHEEE). The interval 24-71 (EEKREEHEEEKRDEEDAESLGKRYGGLSPLRISKRVPPGFTPFRSPAR) is disordered. Pro126 is modified (4-hydroxyproline; partial; in form [Hyp3]-bradykinin and [Hyp3]-bradykinin-Val,Asp).

The protein belongs to the frog skin active peptide (FSAP) family. Bradykinin-related peptide subfamily. Expressed by the skin glands. Expression levels in inguinal glands are much higher than in granular glands.

Its subcellular location is the secreted. May produce in vitro relaxation of rat arterial smooth muscle and constriction of intestinal smooth muscle. May target bradykinin receptors (BDKRB). The polypeptide is Bradykinin-related peptides (Physalaemus nattereri (Cuyaba dwarf frog)).